The chain runs to 163 residues: Calmodulin (163 aa).

Ala-2 carries the post-translational modification N-acetylalanine. 4 EF-hand domains span residues 11–46, 47–82, 84–119, and 120–155; these read EQIA…LGQN, PTEA…KMKE, DHED…LGEK, and LSEE…GATD. 19 residues coordinate Ca(2+): Asp-24, Asp-26, Asp-28, Thr-30, Glu-35, Asp-60, Asp-62, Asn-64, Thr-66, Glu-71, Asp-97, Asp-99, Asn-101, Glu-108, Asp-133, Asp-135, Asp-137, Gln-139, and Glu-144.

Belongs to the calmodulin family. Associates with the spoke-associated complex containing CFAP61, CFAP91 and CFAP251; the association is calcium sensitive. Trimethylation of Lys-119 observed in other calmodulins is absent here.

The protein localises to the cytoplasm. Its subcellular location is the cytoskeleton. It localises to the flagellum axoneme. Calmodulin mediates the control of a large number of enzymes, ion channels and other proteins by Ca(2+). Among the enzymes to be stimulated by the calmodulin-Ca(2+) complex are a number of protein kinases and phosphatases. This chain is Calmodulin, found in Chlamydomonas reinhardtii (Chlamydomonas smithii).